Consider the following 514-residue polypeptide: Maltose/maltodextrin transport system permease protein MalF (514 aa).

The Cytoplasmic segment spans residues 1–12 (MDAVKKKHWWQS). A helical membrane pass occupies residues 13–35 (PQLTWSVIGLLCLLVGYLVVLMY). Over 36–39 (AQGE) the chain is Periplasmic. The chain crosses the membrane as a helical span at residues 40 to 57 (YLFAIMTLILSSVGLYIF). Residues 58 to 69 (SNRKAYAWRYVY) lie on the Cytoplasmic side of the membrane. The chain crosses the membrane as a helical span at residues 70–92 (PGLAGMGLFVLFPLICTIAIAFT). Residues 93–283 (NYSSTNQLTF…QKPFFAIFVW (191 aa)) are Periplasmic-facing. An ABC transmembrane type-1 domain is found at 281-505 (FVWTVVFSVL…LLVGALAIVN (225 aa)). A helical membrane pass occupies residues 284 to 306 (TVVFSVLTVILTVAVGMVLACLV). The Cytoplasmic portion of the chain corresponds to 307-318 (QWEALKGKAIYR). Residues 319–341 (VLLILPYAVPSFISILIFKGLFN) form a helical membrane-spanning segment. Over 342–369 (QSFGEINMMLSALFGIKPAWFSDPTTAR) the chain is Periplasmic. Residues 370 to 392 (TMIIIVNTWLGYPYMMILCMGLL) traverse the membrane as a helical segment. The Cytoplasmic segment spans residues 393–412 (KAIPDDLYEASAMDGAGPFQ). The helical transmembrane segment at 413 to 435 (NFFKITLPLLIKPLTPLMIASFA) threads the bilayer. Residues 436-483 (FNFNNFVLIQLLTNGGPDRLGTTTPAGYTDLLVSYTYRIAFEGGGGQD) lie on the Periplasmic side of the membrane. Residues 484 to 506 (FGLAAAIATLIFLLVGALAIVNL) form a helical membrane-spanning segment. Over 507 to 514 (KATRMKFD) the chain is Cytoplasmic.

It belongs to the binding-protein-dependent transport system permease family. MalFG subfamily. The complex is composed of two ATP-binding proteins (MalK), two transmembrane proteins (MalG and MalF) and a solute-binding protein (MalE).

It is found in the cell inner membrane. In terms of biological role, part of the ABC transporter complex MalEFGK involved in maltose/maltodextrin import. Probably responsible for the translocation of the substrate across the membrane. The protein is Maltose/maltodextrin transport system permease protein MalF (malF) of Klebsiella aerogenes (Enterobacter aerogenes).